Consider the following 535-residue polypeptide: cAMP-regulated D2 protein (535 aa).

A signal peptide spans 1 to 20 (MNKLLVFILLLLLLINISFA). A disulfide bridge connects residues C89 and C109. S213 acts as the Acyl-ester intermediate in catalysis. A disulfide bridge links C265 with C272. Catalysis depends on charge relay system residues E338 and H440. N-linked (GlcNAc...) asparagine glycosylation occurs at N500.

The protein belongs to the type-B carboxylesterase/lipase family.

It is found in the cytoplasmic vesicle. It localises to the esterosome membrane. In Dictyostelium discoideum (Social amoeba), this protein is cAMP-regulated D2 protein (D2).